The primary structure comprises 254 residues: Hydrolase tropI (254 aa).

Residues Cys141, Asp187, and His219 contribute to the active site.

It belongs to the dienelactone hydrolase family.

The protein operates within secondary metabolite biosynthesis. Hydrolase; part of the gene cluster that mediates the biosynthesis of the tropolone class of fungal maleic anhydrides. The pathway begins with the synthesis of 3-methylorcinaldehyde by the non-reducing polyketide synthase (PKS) tropA. 3-methylorcinaldehyde is the substrate for the FAD-dependent monooxygenase tropB to yield a dearomatized hydroxycyclohexadione. The 2-oxoglutarate-dependent dioxygenase tropC then performs the oxidative ring expansion to provide the first tropolone metabolite stipitaldehyde. Trop D converts stipitaldehyde into stipitacetal which is in turn converted to stipitalide by the short-chain dehydrogenase/reductase tropE. The next steps involve tropF, tropG, tropH, tropI and tropJ to form successive tropolone maleic anhydrides including stipitaldehydic, stipitatonic and stipitatic acids. This is Hydrolase tropI from Talaromyces stipitatus (strain ATCC 10500 / CBS 375.48 / QM 6759 / NRRL 1006) (Penicillium stipitatum).